The following is a 251-amino-acid chain: Adenosylcobinamide-GDP ribazoletransferase (251 aa).

A run of 5 helical transmembrane segments spans residues Leu-44 to Gly-64, Ile-114 to His-134, Gly-143 to Val-163, Ala-177 to Ala-197, and Leu-198 to Leu-218.

It belongs to the CobS family. The cofactor is Mg(2+).

The protein resides in the cell inner membrane. The enzyme catalyses alpha-ribazole + adenosylcob(III)inamide-GDP = adenosylcob(III)alamin + GMP + H(+). It catalyses the reaction alpha-ribazole 5'-phosphate + adenosylcob(III)inamide-GDP = adenosylcob(III)alamin 5'-phosphate + GMP + H(+). Its pathway is cofactor biosynthesis; adenosylcobalamin biosynthesis; adenosylcobalamin from cob(II)yrinate a,c-diamide: step 7/7. In terms of biological role, joins adenosylcobinamide-GDP and alpha-ribazole to generate adenosylcobalamin (Ado-cobalamin). Also synthesizes adenosylcobalamin 5'-phosphate from adenosylcobinamide-GDP and alpha-ribazole 5'-phosphate. The chain is Adenosylcobinamide-GDP ribazoletransferase from Nitratidesulfovibrio vulgaris (strain DSM 19637 / Miyazaki F) (Desulfovibrio vulgaris).